The primary structure comprises 679 residues: DNA ligase (679 aa).

NAD(+) contacts are provided by residues 36 to 40 and 94 to 95; these read DEYYD and SL. The active-site N6-AMP-lysine intermediate is Lys126. NAD(+) contacts are provided by Arg147, Glu181, Lys299, and Lys323. Zn(2+)-binding residues include Cys415, Cys418, Cys433, and Cys438. The 77-residue stretch at 603 to 679 folds into the BRCT domain; the sequence is IQSTKLENKT…DEEFLKKMLE (77 aa).

It belongs to the NAD-dependent DNA ligase family. LigA subfamily. The cofactor is Mg(2+). It depends on Mn(2+) as a cofactor.

It carries out the reaction NAD(+) + (deoxyribonucleotide)n-3'-hydroxyl + 5'-phospho-(deoxyribonucleotide)m = (deoxyribonucleotide)n+m + AMP + beta-nicotinamide D-nucleotide.. Functionally, DNA ligase that catalyzes the formation of phosphodiester linkages between 5'-phosphoryl and 3'-hydroxyl groups in double-stranded DNA using NAD as a coenzyme and as the energy source for the reaction. It is essential for DNA replication and repair of damaged DNA. The chain is DNA ligase from Mycoplasmopsis pulmonis (strain UAB CTIP) (Mycoplasma pulmonis).